We begin with the raw amino-acid sequence, 197 residues long: FMN-dependent NADH:quinone oxidoreductase (197 aa).

FMN contacts are provided by residues Ser-10, 16–18, and 96–99; these read SKS and MYNF.

This sequence belongs to the azoreductase type 1 family. Homodimer. FMN serves as cofactor.

The catalysed reaction is 2 a quinone + NADH + H(+) = 2 a 1,4-benzosemiquinone + NAD(+). The enzyme catalyses N,N-dimethyl-1,4-phenylenediamine + anthranilate + 2 NAD(+) = 2-(4-dimethylaminophenyl)diazenylbenzoate + 2 NADH + 2 H(+). In terms of biological role, quinone reductase that provides resistance to thiol-specific stress caused by electrophilic quinones. Its function is as follows. Also exhibits azoreductase activity. Catalyzes the reductive cleavage of the azo bond in aromatic azo compounds to the corresponding amines. This chain is FMN-dependent NADH:quinone oxidoreductase, found in Marinomonas sp. (strain MWYL1).